A 654-amino-acid chain; its full sequence is Acetyl-coenzyme A synthetase (654 aa).

Residues 196-199 (RGGK) and Thr316 each bind CoA. ATP-binding positions include 392–394 (GEP), 416–421 (DTWWQT), Asp506, and Arg521. Residue Ser529 coordinates CoA. Arg532 provides a ligand contact to ATP. Positions 543 and 548 each coordinate Mg(2+). Residue Lys618 is modified to N6-acetyllysine.

Belongs to the ATP-dependent AMP-binding enzyme family. Requires Mg(2+) as cofactor. In terms of processing, acetylated. Deacetylation by the SIR2-homolog deacetylase activates the enzyme.

It catalyses the reaction acetate + ATP + CoA = acetyl-CoA + AMP + diphosphate. Functionally, catalyzes the conversion of acetate into acetyl-CoA (AcCoA), an essential intermediate at the junction of anabolic and catabolic pathways. AcsA undergoes a two-step reaction. In the first half reaction, AcsA combines acetate with ATP to form acetyl-adenylate (AcAMP) intermediate. In the second half reaction, it can then transfer the acetyl group from AcAMP to the sulfhydryl group of CoA, forming the product AcCoA. The polypeptide is Acetyl-coenzyme A synthetase (Methylobacillus flagellatus (strain ATCC 51484 / DSM 6875 / VKM B-1610 / KT)).